The primary structure comprises 147 residues: 3-dehydroquinate dehydratase (147 aa).

The Proton acceptor role is filled by Tyr26. Substrate-binding residues include Asn77, His83, and Asp90. The active-site Proton donor is the His103. Residues 104–105 (LS) and Arg114 each bind substrate.

Belongs to the type-II 3-dehydroquinase family. As to quaternary structure, homododecamer.

The catalysed reaction is 3-dehydroquinate = 3-dehydroshikimate + H2O. Its pathway is metabolic intermediate biosynthesis; chorismate biosynthesis; chorismate from D-erythrose 4-phosphate and phosphoenolpyruvate: step 3/7. In terms of biological role, catalyzes a trans-dehydration via an enolate intermediate. The chain is 3-dehydroquinate dehydratase from Proteus mirabilis (strain HI4320).